The chain runs to 1594 residues: NAD-specific glutamate dehydrogenase (1594 aa).

Residue K816 is part of the active site.

This sequence belongs to the Glu/Leu/Phe/Val dehydrogenases family. Interacts with (unphosphorylated) GarA.

It carries out the reaction L-glutamate + NAD(+) + H2O = 2-oxoglutarate + NH4(+) + NADH + H(+). With respect to regulation, activity is inhibited by unphosphorylated GarA. Stimulated by manganese and magnesium. In terms of biological role, catalyzes the reversible conversion of L-glutamate to 2-oxoglutarate. Highly specific for NAD. The polypeptide is NAD-specific glutamate dehydrogenase (gdh) (Mycolicibacterium smegmatis (strain ATCC 700084 / mc(2)155) (Mycobacterium smegmatis)).